We begin with the raw amino-acid sequence, 202 residues long: Dephospho-CoA kinase (202 aa).

The DPCK domain maps to 4–201 (VIGLTGGIAS…QKYLAMSKQN (198 aa)). 12–17 (ASGKTT) contributes to the ATP binding site.

The protein belongs to the CoaE family.

It localises to the cytoplasm. The catalysed reaction is 3'-dephospho-CoA + ATP = ADP + CoA + H(+). Its pathway is cofactor biosynthesis; coenzyme A biosynthesis; CoA from (R)-pantothenate: step 5/5. In terms of biological role, catalyzes the phosphorylation of the 3'-hydroxyl group of dephosphocoenzyme A to form coenzyme A. The sequence is that of Dephospho-CoA kinase from Vibrio vulnificus (strain CMCP6).